A 41-amino-acid chain; its full sequence is U-AITX-Bg1a (41 aa).

3 disulfides stabilise this stretch: Cys2–Cys35, Cys4–Cys28, and Cys18–Cys36.

This sequence belongs to the sea anemone type 3 (BDS) potassium channel toxin family.

It localises to the secreted. It is found in the nematocyst. In terms of biological role, potently and selectively inhibits voltage-gated potassium channels Kv11/KCNH/ERG. Acts as a gating-modifier toxin that shifts the voltage-dependence of ERG activation in the positive direction and suppresses its current amplitudes elicited by strong depolarizing pulses that maximally activate the channels. The sequence is that of U-AITX-Bg1a from Bunodosoma granuliferum (Red warty sea anemone).